We begin with the raw amino-acid sequence, 392 residues long: NAD(P)H-quinone oxidoreductase subunit H, chloroplastic (392 aa).

Belongs to the complex I 49 kDa subunit family. In terms of assembly, NDH is composed of at least 16 different subunits, 5 of which are encoded in the nucleus.

The protein localises to the plastid. Its subcellular location is the chloroplast thylakoid membrane. It catalyses the reaction a plastoquinone + NADH + (n+1) H(+)(in) = a plastoquinol + NAD(+) + n H(+)(out). The enzyme catalyses a plastoquinone + NADPH + (n+1) H(+)(in) = a plastoquinol + NADP(+) + n H(+)(out). Functionally, NDH shuttles electrons from NAD(P)H:plastoquinone, via FMN and iron-sulfur (Fe-S) centers, to quinones in the photosynthetic chain and possibly in a chloroplast respiratory chain. The immediate electron acceptor for the enzyme in this species is believed to be plastoquinone. Couples the redox reaction to proton translocation, and thus conserves the redox energy in a proton gradient. The chain is NAD(P)H-quinone oxidoreductase subunit H, chloroplastic from Marchantia polymorpha (Common liverwort).